The following is a 646-amino-acid chain: mRNA 3'-end-processing protein RNA14 (646 aa).

HAT repeat units lie at residues 46-78, 80-114, 128-160, 171-204, 249-281, and 290-322; these read DDYDNSRKLYAELHERFPLYSPLWTMHLQSELQ, NEFDTVEKLLAQCLAGDLENNDLSLWSTYLDYVRR, VVIKAFKLVMDKCATFEPKASSFWNDYLGFLHQ, QRLDMIREVYKKMLCVPFDKLEKMWNQYTLWEQE, ANKNNIPQYVLPCKKNDHTQLEAWLKWIAWEKE, and ALKDRVTYVYKQAIQQLLFEPEIWYDYVMYEFD. Positions 571-599 are disordered; it reads DGDPSGVDKSFKKRQIENDENLPDSKRQK.

The protein localises to the nucleus. It localises to the cytoplasm. Functionally, component of the cleavage factor IA (CFIA) complex, which is involved in the endonucleolytic cleavage during polyadenylation-dependent pre-mRNA 3'-end formation. This is mRNA 3'-end-processing protein RNA14 (RNA14) from Candida glabrata (strain ATCC 2001 / BCRC 20586 / JCM 3761 / NBRC 0622 / NRRL Y-65 / CBS 138) (Yeast).